Reading from the N-terminus, the 230-residue chain is MCFSLPSINKEGYLFIVVSFIVTCIAFSISWGFGVTCLFPTLLCTYFFRDPARIIPGNKDLVLSPADGVISKIEEVSYPLSTNNGEEKKFTLVSIFLSVLNVHVNRIPISGTVKEMHYKKGKFVSAMSDRSSNENEKQVIVIEYTKGKEIIVEQIAGLIARRIVCNLRVSQSVKAGERFGIIRFGSRVNIYVPTDVEIRVSEGQTVVGGETIIANLNKENTQEKLTFDLV.

The Schiff-base intermediate with substrate; via pyruvic acid role is filled by S186. S186 is modified (pyruvic acid (Ser); by autocatalysis).

It belongs to the phosphatidylserine decarboxylase family. PSD-A subfamily. In terms of assembly, heterodimer of a large membrane-associated beta subunit and a small pyruvoyl-containing alpha subunit. The cofactor is pyruvate. In terms of processing, is synthesized initially as an inactive proenzyme. Formation of the active enzyme involves a self-maturation process in which the active site pyruvoyl group is generated from an internal serine residue via an autocatalytic post-translational modification. Two non-identical subunits are generated from the proenzyme in this reaction, and the pyruvate is formed at the N-terminus of the alpha chain, which is derived from the carboxyl end of the proenzyme. The post-translation cleavage follows an unusual pathway, termed non-hydrolytic serinolysis, in which the side chain hydroxyl group of the serine supplies its oxygen atom to form the C-terminus of the beta chain, while the remainder of the serine residue undergoes an oxidative deamination to produce ammonia and the pyruvoyl prosthetic group on the alpha chain.

It is found in the cell membrane. The enzyme catalyses a 1,2-diacyl-sn-glycero-3-phospho-L-serine + H(+) = a 1,2-diacyl-sn-glycero-3-phosphoethanolamine + CO2. It functions in the pathway phospholipid metabolism; phosphatidylethanolamine biosynthesis; phosphatidylethanolamine from CDP-diacylglycerol: step 2/2. In terms of biological role, catalyzes the formation of phosphatidylethanolamine (PtdEtn) from phosphatidylserine (PtdSer). The sequence is that of Phosphatidylserine decarboxylase proenzyme from Wolbachia sp. subsp. Brugia malayi (strain TRS).